A 347-amino-acid polypeptide reads, in one-letter code: Quinolinate synthase (347 aa).

Iminosuccinate contacts are provided by histidine 47 and serine 68. [4Fe-4S] cluster is bound at residue cysteine 113. Iminosuccinate-binding positions include tyrosine 139 to asparagine 141 and serine 156. Residue cysteine 200 participates in [4Fe-4S] cluster binding. Residues histidine 226–glutamate 228 and threonine 243 contribute to the iminosuccinate site. Cysteine 297 contributes to the [4Fe-4S] cluster binding site.

It belongs to the quinolinate synthase family. Type 1 subfamily. It depends on [4Fe-4S] cluster as a cofactor.

The protein localises to the cytoplasm. The catalysed reaction is iminosuccinate + dihydroxyacetone phosphate = quinolinate + phosphate + 2 H2O + H(+). The protein operates within cofactor biosynthesis; NAD(+) biosynthesis; quinolinate from iminoaspartate: step 1/1. Its function is as follows. Catalyzes the condensation of iminoaspartate with dihydroxyacetone phosphate to form quinolinate. The sequence is that of Quinolinate synthase from Enterobacter sp. (strain 638).